A 592-amino-acid chain; its full sequence is Multidrug transporter AQR1 (592 aa).

Residues 1–77 (MVESGPHSIN…EISSTHSQDA (77 aa)) are disordered. Residues 99-119 (WCMVALLTACGFWSSLGSPIY) traverse the membrane as a helical segment. N138 carries N-linked (GlcNAc...) asparagine glycosylation. Transmembrane regions (helical) follow at residues 139–159 (ITVV…GGLA), 166–186 (PVLL…ACAP), 188–208 (YGVI…SIAI), 231–251 (GFVL…AAAW), and 255–275 (AIFW…FALL). N285 carries an N-linked (GlcNAc...) asparagine glycan. 6 consecutive transmembrane segments (helical) span residues 340–360 (IFLS…MLSA), 374–394 (LTII…GSFA), 432–452 (LQSV…FGWS), 459–479 (IPSI…TLSA), 497–517 (SCFN…FAKM), and 523–543 (VGGT…LMFI).

Belongs to the major facilitator superfamily. CAR1 family.

It localises to the cell membrane. In terms of biological role, multidrug transporter acts as a determinant of resistance to acetic acid, flucytosine and clotrimazole, these 3 compounds acting synergistically against the pathogen. Reduces the intracellular accumulation of the antifungal agents flucytosine and, to a moderate extent, of clotrimazole. Its role in acetic acid resistance may be indirect, presumably through the transport of a still unidentified physiological substrate. The polypeptide is Multidrug transporter AQR1 (Candida glabrata (strain ATCC 2001 / BCRC 20586 / JCM 3761 / NBRC 0622 / NRRL Y-65 / CBS 138) (Yeast)).